Here is a 330-residue protein sequence, read N- to C-terminus: Probable L-asparaginase (330 aa).

Residues 6-330 (PTIALLATGG…EKIQEMFEEY (325 aa)) enclose the Asparaginase/glutaminase domain. Thr-16 (O-isoaspartyl threonine intermediate) is an active-site residue. Substrate contacts are provided by residues Ser-62 and 95-96 (TD).

This sequence belongs to the asparaginase 1 family.

It is found in the cytoplasm. It carries out the reaction L-asparagine + H2O = L-aspartate + NH4(+). The polypeptide is Probable L-asparaginase (ansA) (Helicobacter pylori (strain ATCC 700392 / 26695) (Campylobacter pylori)).